Here is a 672-residue protein sequence, read N- to C-terminus: Single-strand DNA endonuclease ASTE1 (672 aa).

Positions 349 to 398 are interaction with SHLD2; the sequence is TFLHTQVENMQRPNAHRISQPIRQIIYGLLLNGPSHAEDIAQNTLPSQLL.

It belongs to the asteroid family. In terms of assembly, interacts with SHLD1, SHLD2, SHLD3, RIF1 and MAD2L2/REV7.

In terms of biological role, structure-specific DNA endonuclease that specifically cleaves single-stranded DNA and 3' overhang DNA. Contributes to the control of DNA double-strand break repair choice by antagonizing BRCA1-dependent homologous recombination (HR) and promoting non-homologous end-joining (NHEJ). Recruited to the single-stranded DNA ends by SHLD2 and cleaves the 3' exposed DNA ends, therefore inhibiting DNA end resection (necessary for HR) and promoting DNA end protection (necessary for NHEJ). The polypeptide is Single-strand DNA endonuclease ASTE1 (Aste1) (Mus musculus (Mouse)).